The sequence spans 61 residues: uncharacterized protein (61 aa).

Residues 1-40 (MRRGGEPQCDGREFRIASSPAREREDDNETAPPQTSAAQE) are disordered. Residues 9 to 25 (CDGREFRIASSPARERE) show a composition bias toward basic and acidic residues.

This is an uncharacterized protein from Caenorhabditis elegans.